Here is a 185-residue protein sequence, read N- to C-terminus: Lysine-rich arabinogalactan protein 17 (185 aa).

Positions 1–21 are cleaved as a signal peptide; that stretch reads MTRNILLTVTLICIVFITVGG. Positions 25-160 are disordered; the sequence is ATAPIHSPST…FSPAADDQSG (136 aa). Low complexity predominate over residues 43 to 68; sequence SPAISPAAPTPESTEAPAKTPVEAPV. The segment covering 69-88 has biased composition (pro residues); that stretch reads EAPPSPTPASTPQISPPAPS. Positions 111 to 122 are enriched in basic residues; it reads TKHKKKTKKHKT. Residues 135-146 are compositionally biased toward pro residues; it reads PPAPPGEAPGPG. S159 carries the GPI-anchor amidated serine lipid modification. Residues 160 to 185 constitute a propeptide, removed in mature form; sequence GAQRISVVIQMVGAAAIAWSLLVLAF.

This sequence belongs to the lysine-rich AGP family. Post-translationally, O-glycosylated on the hydroxyproline residues. Predominantly expressed in open flowers. Also expressed in leaves and stems, and at a lower level in roots.

It is found in the cell membrane. Functionally, proteoglycan that seems to be implicated in diverse developmental roles such as differentiation, cell-cell recognition, embryogenesis and programmed cell death. In Arabidopsis thaliana (Mouse-ear cress), this protein is Lysine-rich arabinogalactan protein 17 (AGP17).